The following is a 311-amino-acid chain: Porphobilinogen deaminase (311 aa).

Position 242 is an S-(dipyrrolylmethanemethyl)cysteine (Cys-242).

It belongs to the HMBS family. Monomer. It depends on dipyrromethane as a cofactor.

The enzyme catalyses 4 porphobilinogen + H2O = hydroxymethylbilane + 4 NH4(+). Its pathway is porphyrin-containing compound metabolism; protoporphyrin-IX biosynthesis; coproporphyrinogen-III from 5-aminolevulinate: step 2/4. Functionally, tetrapolymerization of the monopyrrole PBG into the hydroxymethylbilane pre-uroporphyrinogen in several discrete steps. This is Porphobilinogen deaminase from Hahella chejuensis (strain KCTC 2396).